The sequence spans 305 residues: J domain-containing protein 1 (305 aa).

Residues 91 to 163 enclose the J domain; the sequence is TPYEVLGLVK…SRRRMYDMYA (73 aa). The chain crosses the membrane as a helical span at residues 212–232; the sequence is WGMVVWALCMLAGFQVMAFLI.

This sequence belongs to the DnaJ family.

The protein localises to the mitochondrion membrane. In terms of biological role, probable chaperone. The chain is J domain-containing protein 1 (JID1) from Eremothecium gossypii (strain ATCC 10895 / CBS 109.51 / FGSC 9923 / NRRL Y-1056) (Yeast).